A 231-amino-acid chain; its full sequence is Glutathione-specific gamma-glutamylcyclotransferase (231 aa).

Substrate is bound at residue Ile-49–Ser-54. Glu-127 serves as the catalytic Proton acceptor.

It belongs to the gamma-glutamylcyclotransferase family. ChaC subfamily.

The catalysed reaction is glutathione = L-cysteinylglycine + 5-oxo-L-proline. Catalyzes the cleavage of glutathione into 5-oxo-L-proline and a Cys-Gly dipeptide. Acts specifically on glutathione, but not on other gamma-glutamyl peptides. This chain is Glutathione-specific gamma-glutamylcyclotransferase, found in Escherichia coli (strain K12).